A 366-amino-acid polypeptide reads, in one-letter code: tRNA/tmRNA (uracil-C(5))-methyltransferase (366 aa).

S-adenosyl-L-methionine is bound by residues Q190, Y218, N223, E239, and D299. The Nucleophile role is filled by C324. E358 (proton acceptor) is an active-site residue.

The protein belongs to the class I-like SAM-binding methyltransferase superfamily. RNA M5U methyltransferase family. TrmA subfamily.

It carries out the reaction uridine(54) in tRNA + S-adenosyl-L-methionine = 5-methyluridine(54) in tRNA + S-adenosyl-L-homocysteine + H(+). The catalysed reaction is uridine(341) in tmRNA + S-adenosyl-L-methionine = 5-methyluridine(341) in tmRNA + S-adenosyl-L-homocysteine + H(+). In terms of biological role, dual-specificity methyltransferase that catalyzes the formation of 5-methyluridine at position 54 (m5U54) in all tRNAs, and that of position 341 (m5U341) in tmRNA (transfer-mRNA). The sequence is that of tRNA/tmRNA (uracil-C(5))-methyltransferase from Klebsiella pneumoniae (strain 342).